A 271-amino-acid chain; its full sequence is 3-deoxy-manno-octulosonate cytidylyltransferase (271 aa).

The protein belongs to the KdsB family.

The protein localises to the cytoplasm. It carries out the reaction 3-deoxy-alpha-D-manno-oct-2-ulosonate + CTP = CMP-3-deoxy-beta-D-manno-octulosonate + diphosphate. The protein operates within nucleotide-sugar biosynthesis; CMP-3-deoxy-D-manno-octulosonate biosynthesis; CMP-3-deoxy-D-manno-octulosonate from 3-deoxy-D-manno-octulosonate and CTP: step 1/1. It participates in bacterial outer membrane biogenesis; lipopolysaccharide biosynthesis. Functionally, activates KDO (a required 8-carbon sugar) for incorporation into bacterial lipopolysaccharide in Gram-negative bacteria. The chain is 3-deoxy-manno-octulosonate cytidylyltransferase from Leptothrix cholodnii (strain ATCC 51168 / LMG 8142 / SP-6) (Leptothrix discophora (strain SP-6)).